The following is a 442-amino-acid chain: METHLYYDTLYQYQGGVYPAHICLPTDAYLPMRVDCIESLYFRCVFFKNGMHYTEWSKLKFTVISREIKFKDVLKNADFDELFTGLVVMTIPIPIVDFHFDIDSVILKLVYPQLVHREIVLRLYDLICIRPSSDRPSEVSAKNIGIDFYQLTSQGNKQTPDEEKRCLFFQQGPLEPPSTVRGLKAAGNAKPMQFPAHVNEKMTESFLSDSWFEQKVRCKKILDFTQTYRVVVCWYELSFSREMQIENNLLSASQLKRVNAADFWDRTDRYLRDIGSRVLTHIVKTLQIHNRQFKQKFNCNFPVNFSFEHLLSFMQLGKDFWILNLTLDSCIIKAIICFLGFRNGRKSFLAQDEVWGDLIDCSKGSVIYGEKIQWILDSTNNLYSTRREKQNKSWELYVDCCALYVSEKLELDFVLPGGFAITGKFALTDGDIDFFNWRFGLS.

Belongs to the herpesviridae CVC1 protein family. In terms of assembly, interacts (via C-terminus) with capsid vertex component 2/CVC2.

The protein localises to the virion. It is found in the host nucleus. Its function is as follows. Capsid vertex-specific component that plays a role during viral DNA encapsidation, assuring correct genome cleavage and presumably stabilizing capsids that contain full-length viral genomes. The chain is Capsid vertex component 1 from Homo sapiens (Human).